Consider the following 299-residue polypeptide: Regucalcin (299 aa).

Glutamate 18 is a binding site for a divalent metal cation. Arginine 101, asparagine 103, and glutamate 121 together coordinate substrate. Positions 154 and 204 each coordinate a divalent metal cation. Aspartate 204 acts as the Proton donor/acceptor in catalysis.

This sequence belongs to the SMP-30/CGR1 family. The cofactor is Zn(2+). It depends on Mn(2+) as a cofactor. Requires Ca(2+) as cofactor. Mg(2+) is required as a cofactor. Expressed in the liver, and in the pronephros from the late tadpole stage.

It localises to the cytoplasm. It carries out the reaction D-glucono-1,5-lactone + H2O = D-gluconate + H(+). It participates in cofactor biosynthesis; L-ascorbate biosynthesis via UDP-alpha-D-glucuronate pathway; L-ascorbate from UDP-alpha-D-glucuronate: step 3/4. In terms of biological role, gluconolactonase with low activity towards other sugar lactones, including gulonolactone and galactonolactone. Catalyzes a key step in ascorbic acid (vitamin C) biosynthesis. Can also hydrolyze diisopropyl phosphorofluoridate and phenylacetate (in vitro). Calcium-binding protein. Modulates Ca(2+) signaling, and Ca(2+)-dependent cellular processes and enzyme activities. The chain is Regucalcin from Xenopus laevis (African clawed frog).